Consider the following 473-residue polypeptide: Photosystem II CP43 reaction center protein (473 aa).

The propeptide occupies 1–14; sequence MKTLYSLRRFYHVE. Thr-15 carries the post-translational modification N-acetylthreonine. Thr-15 carries the phosphothreonine modification. 5 consecutive transmembrane segments (helical) span residues 69–93, 134–155, 178–200, 255–275, and 291–312; these read LFEV…PHLA, LLGP…KDRN, KALY…RKIT, KPFA…LSYS, and WFNN…ASQA. Glu-367 serves as a coordination point for [CaMn4O5] cluster. The chain crosses the membrane as a helical span at residues 447-471; sequence RARAAAAGFEKGIDRDFEPVLSMTP.

Belongs to the PsbB/PsbC family. PsbC subfamily. In terms of assembly, PSII is composed of 1 copy each of membrane proteins PsbA, PsbB, PsbC, PsbD, PsbE, PsbF, PsbH, PsbI, PsbJ, PsbK, PsbL, PsbM, PsbT, PsbX, PsbY, PsbZ, Psb30/Ycf12, at least 3 peripheral proteins of the oxygen-evolving complex and a large number of cofactors. It forms dimeric complexes. Binds multiple chlorophylls and provides some of the ligands for the Ca-4Mn-5O cluster of the oxygen-evolving complex. It may also provide a ligand for a Cl- that is required for oxygen evolution. PSII binds additional chlorophylls, carotenoids and specific lipids. is required as a cofactor.

The protein localises to the plastid. The protein resides in the chloroplast thylakoid membrane. In terms of biological role, one of the components of the core complex of photosystem II (PSII). It binds chlorophyll and helps catalyze the primary light-induced photochemical processes of PSII. PSII is a light-driven water:plastoquinone oxidoreductase, using light energy to abstract electrons from H(2)O, generating O(2) and a proton gradient subsequently used for ATP formation. The polypeptide is Photosystem II CP43 reaction center protein (Capsella bursa-pastoris (Shepherd's purse)).